A 100-amino-acid chain; its full sequence is Urease subunit gamma (100 aa).

It belongs to the urease gamma subunit family. In terms of assembly, heterotrimer of UreA (gamma), UreB (beta) and UreC (alpha) subunits. Three heterotrimers associate to form the active enzyme.

The protein localises to the cytoplasm. It carries out the reaction urea + 2 H2O + H(+) = hydrogencarbonate + 2 NH4(+). The protein operates within nitrogen metabolism; urea degradation; CO(2) and NH(3) from urea (urease route): step 1/1. The protein is Urease subunit gamma of Lysinibacillus sphaericus (strain C3-41).